Consider the following 195-residue polypeptide: Phosphoheptose isomerase (195 aa).

The region spanning Leu-35–Asn-195 is the SIS domain. Position 51 to 53 (Asn-51 to Gly-53) interacts with substrate. The Zn(2+) site is built by His-60 and Glu-64. Residues Glu-64, Asn-93–Asp-94, Ser-119–Ser-121, Ser-124, and Gln-171 each bind substrate. The Zn(2+) site is built by Gln-171 and His-179.

The protein belongs to the SIS family. GmhA subfamily. In terms of assembly, homotetramer. The cofactor is Zn(2+).

It localises to the cytoplasm. It catalyses the reaction 2 D-sedoheptulose 7-phosphate = D-glycero-alpha-D-manno-heptose 7-phosphate + D-glycero-beta-D-manno-heptose 7-phosphate. The protein operates within carbohydrate biosynthesis; D-glycero-D-manno-heptose 7-phosphate biosynthesis; D-glycero-alpha-D-manno-heptose 7-phosphate and D-glycero-beta-D-manno-heptose 7-phosphate from sedoheptulose 7-phosphate: step 1/1. Functionally, catalyzes the isomerization of sedoheptulose 7-phosphate in D-glycero-D-manno-heptose 7-phosphate. The sequence is that of Phosphoheptose isomerase from Sulfurimonas denitrificans (strain ATCC 33889 / DSM 1251) (Thiomicrospira denitrificans (strain ATCC 33889 / DSM 1251)).